Consider the following 342-residue polypeptide: MNIMRTAMLLAFMTALFMGVGFLIGGKGGMMIALVIAGAMNLFSYWNSDRMVLSAYHAQEVDPRNAPEFYEIVRGLTQNAGLPMPKVYIFDNPQPNAFATGRNPQNAAVAASTGLLQALTPEEVAGVMAHELAHVEHRDTLTMTITATLAGAISMLGNFAFFFGGRRDENGNGGGIIGPLVAMIVAPFAAMLVQMAISRTREYAADRRGAEICGNPLWLASALAKIAGAHQPNYQAERNPATAHMFIINPLSGQKMDSLFSTHPDTSNRIAALQALAQEMGGRQANVYRPQHSKPAASGPWGSSAERSTDDPWGVKGGASTRSVPKIGRRGKDNDAPKGPWN.

Transmembrane regions (helical) follow at residues 6-26 (TAMLLAFMTALFMGVGFLIGG) and 28-48 (GGMMIALVIAGAMNLFSYWNS). A Zn(2+)-binding site is contributed by His-130. Residue Glu-131 is part of the active site. His-134 lines the Zn(2+) pocket. 2 consecutive transmembrane segments (helical) span residues 145–165 (ITATLAGAISMLGNFAFFFGG) and 173–193 (GGGIIGPLVAMIVAPFAAMLV). A Zn(2+)-binding site is contributed by Glu-202. The tract at residues 290-342 (PQHSKPAASGPWGSSAERSTDDPWGVKGGASTRSVPKIGRRGKDNDAPKGPWN) is disordered.

The protein belongs to the peptidase M48B family. Zn(2+) is required as a cofactor.

The protein resides in the cell inner membrane. The chain is Protease HtpX homolog from Allorhizobium ampelinum (strain ATCC BAA-846 / DSM 112012 / S4) (Agrobacterium vitis (strain S4)).